Consider the following 117-residue polypeptide: Large ribosomal subunit protein uL18 (117 aa).

The protein belongs to the universal ribosomal protein uL18 family. In terms of assembly, part of the 50S ribosomal subunit; part of the 5S rRNA/L5/L18/L25 subcomplex. Contacts the 5S and 23S rRNAs.

Its function is as follows. This is one of the proteins that bind and probably mediate the attachment of the 5S RNA into the large ribosomal subunit, where it forms part of the central protuberance. This chain is Large ribosomal subunit protein uL18, found in Coxiella burnetii (strain CbuK_Q154) (Coxiella burnetii (strain Q154)).